The chain runs to 1230 residues: Ubiquitin carboxyl-terminal hydrolase 15 (1230 aa).

The MATH domain maps to 39-179 (EDSFTWNIPD…EGTLNITAYV (141 aa)). In terms of domain architecture, USP spans 205 to 536 (VGFRNQGATC…SAYMLVYIRQ (332 aa)). C214 serves as the catalytic Nucleophile. Residue H465 is the Proton acceptor of the active site.

This sequence belongs to the peptidase C19 family. As to quaternary structure, interacts with PEX6; promoting association with the PEX1-PEX6 ATPase complex.

It is found in the cytoplasm. The protein resides in the cytosol. The protein localises to the peroxisome. It catalyses the reaction Thiol-dependent hydrolysis of ester, thioester, amide, peptide and isopeptide bonds formed by the C-terminal Gly of ubiquitin (a 76-residue protein attached to proteins as an intracellular targeting signal).. Deubiquitinase involved in peroxisome import by mediating deubiquitination of the peroxisomal import receptor PEX5. Catalyzes deubiquitination of both monoubiquitiated and polyubiquitinated forms of PEX5 following its retrotranslocation into the cytosol, resetting PEX5 for a subsequent import cycle. The polypeptide is Ubiquitin carboxyl-terminal hydrolase 15 (Saccharomyces cerevisiae (strain ATCC 204508 / S288c) (Baker's yeast)).